Consider the following 265-residue polypeptide: MASLGKYVSKLAGSRVLVIGGSSGIGFGVAEAAIQNGASSVFISSSSQTKISSAIERLKENNQSAKAQLHGFPCNLGSPDTLTSEVENLFAEVAKSGKLDHVVFTAGDKLAVGKLEDFTLDAIRQAGTVRFFAPLVVAQQLRKHLDESGSSSFTVATGGATEHVSKDWSIMYSYLSGLRGMIRGLAVDLAPIRVNAVAQGPTDTEIWSYVKEMGYWDNVTGHLKGRMTTGEIGKVEDVVEAYLYLMKNKNTSGSVVETTGGTLLS.

Positions 1 to 32 (MASLGKYVSKLAGSRVLVIGGSSGIGFGVAEA) are cleaved as a signal peptide. Ser-22, Ser-23, Ile-25, Ser-45, and Lys-50 together coordinate NADP(+). A glycan (N-linked (GlcNAc...) asparagine) is linked at Asn-62. Asn-88, Arg-130, and Thr-204 together coordinate NADP(+). N-linked (GlcNAc...) asparagine glycans are attached at residues Asn-218 and Asn-250.

This sequence belongs to the short-chain dehydrogenases/reductases (SDR) family.

Short-chain dehydrogenase/reductase; part of the gene cluster that mediates the biosynthesis of fusarubins, highly pigmented naphthoquinones responsible for the coloration of the fruiting bodies. The non-reducing polyketide synthase FSR1 is responsible for the condensation of seven acetyl-CoA units to yield a haptaketide. After rings A and B are formed by aldol-type cyclization, the PKS-derived product is released as 6-O-demethylfusarubinaldehyde. Then, two hydroxyl groups at C-5 and C-10 are incorporated by FSR3, and simultaneously hydroxyl groups at C-6 and C-8 are methylated by FSR2. The aldehyde is, on the one hand, reduced by FSR3 to 8-O-methylfusarubin alcohol, which equilibrates mainly with 8-O-methylfusarubin and only small amounts of 8-O-methylnectriafurone. On the other hand, the aldehyde can be oxidized to form 8-O-methylfusarubinic acid, a reaction driven by FSR3 equilibrating with 8-O-methylfusarubinlactone, finally resulting in 8-O-methylanhydrofusarubinlactol after a further reduction step and loss of water. 8-O-Methylfusarubinic acid can also undergo decarboxylation, resulting in 8-O-methyl-13-hydroxynorjavanicin after another hydroxylation step at C-13. Both steps are most likely also accomplished by FSR3. No enzymatic function has been determined so far for either FSR4 and FSR5. Their deletion does not alter the product spectrum, but the possibility that they catalyze specific enzymatic steps during perithecium development cannot be ruled out. FSR4 might possess a regulatory function in the biosynthesis of fusarubins. The protein is Short-chain dehydrogenase/reductase fsr5 of Gibberella fujikuroi (strain CBS 195.34 / IMI 58289 / NRRL A-6831) (Bakanae and foot rot disease fungus).